The following is a 398-amino-acid chain: tRNA pseudouridine synthase D (398 aa).

D76 functions as the Nucleophile in the catalytic mechanism. Residues 151–360 form the TRUD domain; it reads GVPNFFGEQR…MPGERRPLRI (210 aa).

Belongs to the pseudouridine synthase TruD family.

It carries out the reaction uridine(13) in tRNA = pseudouridine(13) in tRNA. Its function is as follows. Responsible for synthesis of pseudouridine from uracil-13 in transfer RNAs. The polypeptide is tRNA pseudouridine synthase D (Syntrophotalea carbinolica (strain DSM 2380 / NBRC 103641 / GraBd1) (Pelobacter carbinolicus)).